Reading from the N-terminus, the 150-residue chain is D-aminoacyl-tRNA deacylase (150 aa).

Positions 140–141 match the Gly-cisPro motif, important for rejection of L-amino acids motif; sequence GP.

It belongs to the DTD family. In terms of assembly, homodimer.

It localises to the cytoplasm. It catalyses the reaction glycyl-tRNA(Ala) + H2O = tRNA(Ala) + glycine + H(+). The catalysed reaction is a D-aminoacyl-tRNA + H2O = a tRNA + a D-alpha-amino acid + H(+). Its function is as follows. An aminoacyl-tRNA editing enzyme that deacylates mischarged D-aminoacyl-tRNAs. Also deacylates mischarged glycyl-tRNA(Ala), protecting cells against glycine mischarging by AlaRS. Acts via tRNA-based rather than protein-based catalysis; rejects L-amino acids rather than detecting D-amino acids in the active site. By recycling D-aminoacyl-tRNA to D-amino acids and free tRNA molecules, this enzyme counteracts the toxicity associated with the formation of D-aminoacyl-tRNA entities in vivo and helps enforce protein L-homochirality. The protein is D-aminoacyl-tRNA deacylase (DTD1) of Kluyveromyces lactis (strain ATCC 8585 / CBS 2359 / DSM 70799 / NBRC 1267 / NRRL Y-1140 / WM37) (Yeast).